The primary structure comprises 161 residues: 2-C-methyl-D-erythritol 2,4-cyclodiphosphate synthase (161 aa).

Residues Asp-10 and His-12 each contribute to the a divalent metal cation site. Residues 10-12 (DVH) and 36-37 (HS) contribute to the 4-CDP-2-C-methyl-D-erythritol 2-phosphate site. His-44 provides a ligand contact to a divalent metal cation. Residues 58-60 (DIG), 63-67 (FPDTD), 134-137 (TTTE), Phe-141, and Arg-144 each bind 4-CDP-2-C-methyl-D-erythritol 2-phosphate.

It belongs to the IspF family. Homotrimer. Requires a divalent metal cation as cofactor.

The enzyme catalyses 4-CDP-2-C-methyl-D-erythritol 2-phosphate = 2-C-methyl-D-erythritol 2,4-cyclic diphosphate + CMP. The protein operates within isoprenoid biosynthesis; isopentenyl diphosphate biosynthesis via DXP pathway; isopentenyl diphosphate from 1-deoxy-D-xylulose 5-phosphate: step 4/6. Its function is as follows. Involved in the biosynthesis of isopentenyl diphosphate (IPP) and dimethylallyl diphosphate (DMAPP), two major building blocks of isoprenoid compounds. Catalyzes the conversion of 4-diphosphocytidyl-2-C-methyl-D-erythritol 2-phosphate (CDP-ME2P) to 2-C-methyl-D-erythritol 2,4-cyclodiphosphate (ME-CPP) with a corresponding release of cytidine 5-monophosphate (CMP). The polypeptide is 2-C-methyl-D-erythritol 2,4-cyclodiphosphate synthase (Shewanella putrefaciens (strain CN-32 / ATCC BAA-453)).